Reading from the N-terminus, the 145-residue chain is Small ribosomal subunit protein uS15 (145 aa).

The protein belongs to the universal ribosomal protein uS15 family. As to quaternary structure, part of the 30S ribosomal subunit.

The chain is Small ribosomal subunit protein uS15 from Thermoplasma acidophilum (strain ATCC 25905 / DSM 1728 / JCM 9062 / NBRC 15155 / AMRC-C165).